The chain runs to 233 residues: Probable GTP-binding protein EngB (233 aa).

An EngB-type G domain is found at Gly21–Asp228. GTP-binding positions include Gly29–Ser36 and Gly56–Ala60. Ser36 and Thr58 together coordinate Mg(2+). The segment at Pro68–Thr87 is disordered. A compositionally biased stretch (basic and acidic residues) spans Pro72–Gly85. GTP is bound by residues Asp107–Gly110, Thr174–Asp177, and Phe207–Ala209.

Belongs to the TRAFAC class TrmE-Era-EngA-EngB-Septin-like GTPase superfamily. EngB GTPase family. Mg(2+) serves as cofactor.

Its function is as follows. Necessary for normal cell division and for the maintenance of normal septation. This chain is Probable GTP-binding protein EngB, found in Symbiobacterium thermophilum (strain DSM 24528 / JCM 14929 / IAM 14863 / T).